Consider the following 41-residue polypeptide: Tachystatin-C (41 aa).

3 disulfide bridges follow: C12/C28, C19/C33, and C27/C38.

Granular hemocytes, small secretory granules.

It localises to the secreted. Binds to chitin. Shows strong activity against E.coli (IC(50) is 1.2 ug/ml). Is also very active against S.aureus (IC(50) is 0.8 ug/ml), C.albicans (IC(50) is 0.9 ug/ml) and P.pastoris (IC(50) is 0.3 ug/ml). Binds to chitin (5.2 uM are required to obtain 50% of binding). Causes hemolysis on sheep erythrocytes, probably by forming ion-permeable pores. The chain is Tachystatin-C from Tachypleus tridentatus (Japanese horseshoe crab).